Here is a 327-residue protein sequence, read N- to C-terminus: Malate dehydrogenase (327 aa).

12-18 (GAAGQIA) provides a ligand contact to NAD(+). Substrate contacts are provided by Arg93 and Arg99. NAD(+) contacts are provided by residues Asn106, Gln113, and 130 to 132 (VGN). Substrate-binding residues include Asn132 and Arg163. Residue His188 is the Proton acceptor of the active site.

This sequence belongs to the LDH/MDH superfamily. MDH type 2 family.

The enzyme catalyses (S)-malate + NAD(+) = oxaloacetate + NADH + H(+). Catalyzes the reversible oxidation of malate to oxaloacetate. The sequence is that of Malate dehydrogenase from Burkholderia mallei (strain NCTC 10247).